Here is a 112-residue protein sequence, read N- to C-terminus: 2Fe-2S ferredoxin (112 aa).

The 103-residue stretch at Ile-5–Thr-107 folds into the 2Fe-2S ferredoxin-type domain. The [2Fe-2S] cluster site is built by Cys-42, Cys-48, Cys-51, and Cys-88.

Belongs to the adrenodoxin/putidaredoxin family. [2Fe-2S] cluster is required as a cofactor.

Ferredoxin are iron-sulfur proteins that transfer electrons in a wide variety of metabolic reactions. The chain is 2Fe-2S ferredoxin (fdxB) from Rickettsia prowazekii (strain Madrid E).